The primary structure comprises 475 residues: Ribulose bisphosphate carboxylase large chain (475 aa).

Positions 1-2 (MS) are excised as a propeptide. Pro3 is subject to N-acetylproline. Lys14 is modified (N6,N6,N6-trimethyllysine). Positions 123 and 173 each coordinate substrate. Lys175 acts as the Proton acceptor in catalysis. Lys177 is a substrate binding site. Mg(2+)-binding residues include Lys201, Asp203, and Glu204. Lys201 bears the N6-carboxylysine mark. His294 functions as the Proton acceptor in the catalytic mechanism. 3 residues coordinate substrate: Arg295, His327, and Ser379.

Belongs to the RuBisCO large chain family. Type I subfamily. Heterohexadecamer of 8 large chains and 8 small chains; disulfide-linked. The disulfide link is formed within the large subunit homodimers. It depends on Mg(2+) as a cofactor. The disulfide bond which can form in the large chain dimeric partners within the hexadecamer appears to be associated with oxidative stress and protein turnover.

It is found in the plastid. Its subcellular location is the chloroplast. The catalysed reaction is 2 (2R)-3-phosphoglycerate + 2 H(+) = D-ribulose 1,5-bisphosphate + CO2 + H2O. It carries out the reaction D-ribulose 1,5-bisphosphate + O2 = 2-phosphoglycolate + (2R)-3-phosphoglycerate + 2 H(+). RuBisCO catalyzes two reactions: the carboxylation of D-ribulose 1,5-bisphosphate, the primary event in carbon dioxide fixation, as well as the oxidative fragmentation of the pentose substrate in the photorespiration process. Both reactions occur simultaneously and in competition at the same active site. The protein is Ribulose bisphosphate carboxylase large chain of Pinus krempfii (Krempf's pine).